The sequence spans 547 residues: 4-coumarate-CoA ligase 1 (547 aa).

Residues 190–194 (SSGTT), His-238, 310–312 (AAP), 332–333 (QG), Thr-337, Asp-421, Arg-436, and Lys-527 contribute to the ATP site. The segment at 263–332 (EIVRLMELVE…EKLPNAKLGQ (70 aa)) is SBD1. The interval 333–400 (GYGMTEAGPV…IRGNQIMKGY (68 aa)) is SBD2.

Belongs to the ATP-dependent AMP-binding enzyme family. In terms of tissue distribution, mostly expressed in stems, and, to a lower extent, in bulbs.

It catalyses the reaction (E)-4-coumarate + ATP + CoA = (E)-4-coumaroyl-CoA + AMP + diphosphate. Its pathway is phytoalexin biosynthesis; 3,4',5-trihydroxystilbene biosynthesis; 3,4',5-trihydroxystilbene from trans-4-coumarate: step 1/2. Its function is as follows. Produces CoA thioesters of a variety of hydroxy- and methoxy-substituted cinnamic acids, which are used to synthesize several phenylpropanoid-derived compounds, including anthocyanins, flavonoids, isoflavonoids, coumarins, lignin, suberin and wall-bound phenolics. The sequence is that of 4-coumarate-CoA ligase 1 from Narcissus pseudonarcissus (Daffodil).